A 447-amino-acid chain; its full sequence is GTPase Der (447 aa).

EngA-type G domains are found at residues 3-167 (PVIA…FAQR) and 181-354 (IRLA…AAAM). Residues 9-16 (GRPNVGKS), 56-60 (DTGGF), 119-122 (NKAE), 187-194 (GRPNVGKS), 234-238 (DTAGI), and 299-302 (NKWD) each bind GTP. The KH-like domain maps to 355–439 (SNLSTPKLTR…PLRIELRSGK (85 aa)).

Belongs to the TRAFAC class TrmE-Era-EngA-EngB-Septin-like GTPase superfamily. EngA (Der) GTPase family. In terms of assembly, associates with the 50S ribosomal subunit.

In terms of biological role, GTPase that plays an essential role in the late steps of ribosome biogenesis. In Herminiimonas arsenicoxydans, this protein is GTPase Der.